Reading from the N-terminus, the 93-residue chain is uncharacterized protein (93 aa).

The protein to M.tuberculosis Rv1738.

This is an uncharacterized protein from Mycobacterium tuberculosis (strain CDC 1551 / Oshkosh).